A 417-amino-acid chain; its full sequence is 26S proteasome regulatory subunit RPN14 (417 aa).

WD repeat units follow at residues 134–173 (AHVSEITKLKFFPSGEALISSSQDMQLKIWSVKDGSNPRT), 176–215 (GHRATVTDIAIIDRGRNVLSASLDGTIRLWECGTGTTIHT), 242–281 (ISTSKKNNLEFGTYGKYVIAGHVSGVITVHNVFSKEQTIQ), 285–325 (KFTC…CPVG), 330–371 (NEGT…PAIE), and 380–416 (SNDDEVSQFCYVSDDESNGEVLEVGKNNFCALYNLSN).

Belongs to the WD repeat PAAF1/RPN14 family. In terms of assembly, associates with the 19S proteasome regulatory particle (RP). Interacts directly with RPT5 and RPT6.

It localises to the cytoplasm. The protein localises to the nucleus. Functionally, acts as a regulatory subunit of the 26 proteasome which is involved in the ATP-dependent degradation of ubiquitinated proteins. Is not a genuine component of the 26S proteasome, but an auxiliary factor that interacts with the proteasomal ATPase of 19S regulatory particle (RP). Acts as a chaperone which regulates the highly structured assembly of the 19S regulatory particle. Involved in the substrate specificity of the 26S proteasome and is especially involved in the degradation of ubiquitinated GCN4. May contribute to the stability of the 26S proteasome in some stress conditions. This chain is 26S proteasome regulatory subunit RPN14 (RPN14), found in Saccharomyces cerevisiae (strain ATCC 204508 / S288c) (Baker's yeast).